Reading from the N-terminus, the 266-residue chain is 26 kDa endochitinase 2 (266 aa).

Residues 1–23 form the signal peptide; it reads MRSLAVVVAVVATVAMAIGTARG. Cystine bridges form between Cys-46–Cys-108, Cys-120–Cys-128, and Cys-227–Cys-259. Glu-90 (proton donor) is an active-site residue.

It belongs to the glycosyl hydrolase 19 family. Chitinase class II subfamily.

It carries out the reaction Random endo-hydrolysis of N-acetyl-beta-D-glucosaminide (1-&gt;4)-beta-linkages in chitin and chitodextrins.. In terms of biological role, defense against chitin-containing fungal pathogens. This is 26 kDa endochitinase 2 from Hordeum vulgare (Barley).